The following is a 585-amino-acid chain: 1-deoxy-D-xylulose-5-phosphate synthase (585 aa).

Thiamine diphosphate contacts are provided by residues histidine 80 and 121–123 (GHS). Aspartate 152 serves as a coordination point for Mg(2+). Thiamine diphosphate contacts are provided by residues 153-154 (GS), asparagine 181, tyrosine 259, and glutamate 334. Asparagine 181 serves as a coordination point for Mg(2+).

This sequence belongs to the transketolase family. DXPS subfamily. In terms of assembly, homodimer. It depends on Mg(2+) as a cofactor. Thiamine diphosphate is required as a cofactor.

It carries out the reaction D-glyceraldehyde 3-phosphate + pyruvate + H(+) = 1-deoxy-D-xylulose 5-phosphate + CO2. It functions in the pathway metabolic intermediate biosynthesis; 1-deoxy-D-xylulose 5-phosphate biosynthesis; 1-deoxy-D-xylulose 5-phosphate from D-glyceraldehyde 3-phosphate and pyruvate: step 1/1. Functionally, catalyzes the acyloin condensation reaction between C atoms 2 and 3 of pyruvate and glyceraldehyde 3-phosphate to yield 1-deoxy-D-xylulose-5-phosphate (DXP). This chain is 1-deoxy-D-xylulose-5-phosphate synthase, found in Buchnera aphidicola subsp. Schizaphis graminum (strain Sg).